Here is a 245-residue protein sequence, read N- to C-terminus: 8-amino-3,8-dideoxy-manno-octulosonate cytidylyltransferase (245 aa).

Belongs to the KdsB family.

It localises to the cytoplasm. It catalyses the reaction 8-amino-3,8-dideoxy-alpha-D-manno-octulosonate + CTP = CMP-8-amino-3,8-dideoxy-alpha-D-manno-oct-2-ulosonate + diphosphate. It participates in bacterial outer membrane biogenesis; lipopolysaccharide biosynthesis. Activates KDO8N (a required 8-carbon sugar) for incorporation into bacterial lipopolysaccharide in the Shewanella genus. In Shewanella sediminis (strain HAW-EB3), this protein is 8-amino-3,8-dideoxy-manno-octulosonate cytidylyltransferase.